The following is a 167-amino-acid chain: Interferon gamma (167 aa).

An N-terminal signal peptide occupies residues 1–23 (MNYTGYLLAFQLCIILGSSSCYC). Residue Gln-24 is modified to Pyrrolidone carboxylic acid. Residues Asn-39 and Asn-105 are each glycosylated (N-linked (GlcNAc...) asparagine). A disordered region spans residues 148–167 (SNLRKRKRSQSTFHGRRASI). Basic residues predominate over residues 149–167 (NLRKRKRSQSTFHGRRASI).

Belongs to the type II (or gamma) interferon family. As to quaternary structure, homodimer. Interacts with IFNGR1 (via extracellular domain); this interaction promotes IFNGR1 dimerization. Released primarily from activated T lymphocytes.

The protein localises to the secreted. Type II interferon produced by immune cells such as T-cells and NK cells that plays crucial roles in antimicrobial, antiviral, and antitumor responses by activating effector immune cells and enhancing antigen presentation. Primarily signals through the JAK-STAT pathway after interaction with its receptor IFNGR1 to affect gene regulation. Upon IFNG binding, IFNGR1 intracellular domain opens out to allow association of downstream signaling components JAK2, JAK1 and STAT1, leading to STAT1 activation, nuclear translocation and transcription of IFNG-regulated genes. Many of the induced genes are transcription factors such as IRF1 that are able to further drive regulation of a next wave of transcription. Plays a role in class I antigen presentation pathway by inducing a replacement of catalytic proteasome subunits with immunoproteasome subunits. In turn, increases the quantity, quality, and repertoire of peptides for class I MHC loading. Increases the efficiency of peptide generation also by inducing the expression of activator PA28 that associates with the proteasome and alters its proteolytic cleavage preference. Up-regulates as well MHC II complexes on the cell surface by promoting expression of several key molecules such as cathepsins B/CTSB, H/CTSH, and L/CTSL. Participates in the regulation of hematopoietic stem cells during development and under homeostatic conditions by affecting their development, quiescence, and differentiation. In Dasypus novemcinctus (Nine-banded armadillo), this protein is Interferon gamma (IFNG).